Consider the following 1280-residue polypeptide: Papilin (1280 aa).

The N-terminal stretch at 1–20 (MQLFPLLFSLLLTSTPGSWA) is a signal peptide. 5 TSP type-1 domains span residues 27-81 (SDTW…ESCP), 305-362 (RGFS…QPCP), 363-422 (KTKR…ACNL), 424-482 (HCAV…EACP), and 485-540 (RGQA…QPCH). Disulfide bonds link cysteine 39/cysteine 75, cysteine 43/cysteine 80, and cysteine 54/cysteine 65. 3 disulfides stabilise this stretch: cysteine 425–cysteine 464, cysteine 436–cysteine 476, and cysteine 440–cysteine 481. Disordered regions lie at residues 541 to 626 (LPQE…DCRH) and 672 to 715 (PQQA…PSEC). Residues 585–599 (AQSNPREGQDPNLSS) are compositionally biased toward polar residues. Basic and acidic residues predominate over residues 706–715 (QAHEGEPSEC). 3 disulfide bridges follow: cysteine 750-cysteine 800, cysteine 759-cysteine 783, and cysteine 775-cysteine 796. Residues 750–800 (CLLPSAQGSCGDWAARWYFVASVGRCNRFWYGGCHGNANNFASEQECMNTC) form the BPTI/Kunitz inhibitor domain. The tract at residues 800-902 (CRGQHGPRRP…AVPPTHSPSY (103 aa)) is disordered. Basic and acidic residues predominate over residues 879–891 (IRPRVPGLDREAR). Positions 900–990 (PSYRIRLAGS…EPQEIQLRVT (91 aa)) constitute an Ig-like C2-type 1 domain. A disulfide bond links cysteine 926 and cysteine 973. Residues 1002-1012 (PRHFPEPRNPD) are compositionally biased toward basic and acidic residues. Residues 1002–1042 (PRHFPEPRNPDLGHGPPHRGTGAEAGGHRVLSPSHPRPATR) are disordered. 2 consecutive Ig-like C2-type domains span residues 1039–1128 (PATR…VQLR) and 1133–1218 (LTIT…TEVK). Cystine bridges form between cysteine 1065–cysteine 1112 and cysteine 1154–cysteine 1202. The PLAC domain occupies 1231–1270 (LGKDCIDQPELANCALILQAQLCGNEYYSSFCCASCSRFQ).

The protein belongs to the papilin family.

It is found in the secreted. The protein is Papilin (Papln) of Mus musculus (Mouse).